The sequence spans 205 residues: Molybdenum cofactor guanylyltransferase (205 aa).

GTP is bound by residues 14–16 (LAG), Lys-27, Asp-77, and Asp-107. Mg(2+) is bound at residue Asp-107.

It belongs to the MobA family. As to quaternary structure, monomer. Mg(2+) is required as a cofactor.

It localises to the cytoplasm. The catalysed reaction is Mo-molybdopterin + GTP + H(+) = Mo-molybdopterin guanine dinucleotide + diphosphate. In terms of biological role, transfers a GMP moiety from GTP to Mo-molybdopterin (Mo-MPT) cofactor (Moco or molybdenum cofactor) to form Mo-molybdopterin guanine dinucleotide (Mo-MGD) cofactor. The polypeptide is Molybdenum cofactor guanylyltransferase (Burkholderia lata (strain ATCC 17760 / DSM 23089 / LMG 22485 / NCIMB 9086 / R18194 / 383)).